The chain runs to 109 residues: T-cell surface glycoprotein CD1b (109 aa).

The signal sequence occupies residues 1–18 (MLLLPLLLLAGRFPGGDN). 2 N-linked (GlcNAc...) asparagine glycosylation sites follow: Asn38 and Asn75.

In terms of assembly, heterodimer with B2M (beta-2-microglobulin). Interacts with saposin C. Expressed on cortical thymocytes, on certain T-cell leukemias, and in various other tissues.

The protein localises to the cell membrane. It localises to the endosome membrane. It is found in the lysosome membrane. In terms of biological role, antigen-presenting protein that binds self and non-self lipid and glycolipid antigens and presents them to T-cell receptors on natural killer T-cells. This is T-cell surface glycoprotein CD1b (CD1B) from Oryctolagus cuniculus (Rabbit).